The chain runs to 142 residues: Large ribosomal subunit protein uL11 (142 aa).

This sequence belongs to the universal ribosomal protein uL11 family. As to quaternary structure, part of the ribosomal stalk of the 50S ribosomal subunit. Interacts with L10 and the large rRNA to form the base of the stalk. L10 forms an elongated spine to which L12 dimers bind in a sequential fashion forming a multimeric L10(L12)X complex. One or more lysine residues are methylated.

Its function is as follows. Forms part of the ribosomal stalk which helps the ribosome interact with GTP-bound translation factors. The sequence is that of Large ribosomal subunit protein uL11 from Xanthomonas axonopodis pv. citri (strain 306).